A 196-amino-acid chain; its full sequence is Imidazoleglycerol-phosphate dehydratase (196 aa).

The protein belongs to the imidazoleglycerol-phosphate dehydratase family.

The protein localises to the cytoplasm. The catalysed reaction is D-erythro-1-(imidazol-4-yl)glycerol 3-phosphate = 3-(imidazol-4-yl)-2-oxopropyl phosphate + H2O. It participates in amino-acid biosynthesis; L-histidine biosynthesis; L-histidine from 5-phospho-alpha-D-ribose 1-diphosphate: step 6/9. This is Imidazoleglycerol-phosphate dehydratase from Clostridium botulinum (strain Langeland / NCTC 10281 / Type F).